A 505-amino-acid chain; its full sequence is DEAD-box ATP-dependent RNA helicase 38 (505 aa).

Positions M1–S81 are disordered. Positions K27 to A44 are enriched in low complexity. Positions A100–A129 match the Q motif motif. Residues M134 to I310 enclose the Helicase ATP-binding domain. An ATP-binding site is contributed by A147–T154. The DEAD box signature appears at D254–D257. The Helicase C-terminal domain occupies V338–D493.

It belongs to the DEAD box helicase family. DDX19/DBP5 subfamily.

It is found in the cytoplasm. The protein localises to the nucleus. It catalyses the reaction ATP + H2O = ADP + phosphate + H(+). ATP-dependent RNA helicase essential for mRNA export from the nucleus. Plays an important role in the positive regulation of CBF/DREB transcription factors. This Oryza sativa subsp. japonica (Rice) protein is DEAD-box ATP-dependent RNA helicase 38.